Reading from the N-terminus, the 319-residue chain is Probable cytochrome c oxidase subunit 2 (319 aa).

The signal sequence occupies residues 1–33 (MSPNGSDRSPRRPMRRKLLQALTAGLVLATATG). Transmembrane regions (helical) follow at residues 63 to 83 (WAAA…SVFF) and 101 to 121 (LPIE…LFYF). The Cu cation site is built by histidine 227, cysteine 262, cysteine 266, and histidine 270.

Belongs to the cytochrome c oxidase subunit 2 family. Cu cation is required as a cofactor. Heme serves as cofactor.

The protein resides in the cell membrane. The enzyme catalyses 4 Fe(II)-[cytochrome c] + O2 + 8 H(+)(in) = 4 Fe(III)-[cytochrome c] + 2 H2O + 4 H(+)(out). Functionally, subunits I and II form the functional core of the enzyme complex. Electrons originating in cytochrome c are transferred via heme a and Cu(A) to the binuclear center formed by heme a3 and Cu(B). This is Probable cytochrome c oxidase subunit 2 (ctaC) from Streptomyces coelicolor (strain ATCC BAA-471 / A3(2) / M145).